Reading from the N-terminus, the 787-residue chain is Bifunctional dethiobiotin synthetase/adenosylmethionine-8-amino-7-oxononanoate aminotransferase (787 aa).

23–28 (DVGKTI) is a binding site for ATP. Threonine 27 contributes to the Mg(2+) binding site. Threonine 54 contacts substrate. Residues aspartate 61 and glutamate 123 each contribute to the Mg(2+) site. Residues 123 to 126 (ETAG) and 184 to 185 (KD) contribute to the ATP site. 323–324 (WW) serves as a coordination point for (8S)-8-amino-7-oxononanoate. 384–385 (GS) lines the pyridoxal 5'-phosphate pocket. Tyrosine 421 serves as a coordination point for (8S)-8-amino-7-oxononanoate. Residue aspartate 582 coordinates pyridoxal 5'-phosphate. Positions 611 and 645 each coordinate (8S)-8-amino-7-oxononanoate. 646–647 (HS) provides a ligand contact to pyridoxal 5'-phosphate. A (8S)-8-amino-7-oxononanoate-binding site is contributed by arginine 756.

The protein in the N-terminal section; belongs to the dethiobiotin synthetase family. In the C-terminal section; belongs to the class-III pyridoxal-phosphate-dependent aminotransferase family. BioA subfamily. In terms of assembly, homodimer. Mg(2+) serves as cofactor. It depends on pyridoxal 5'-phosphate as a cofactor.

It localises to the mitochondrion matrix. The catalysed reaction is (7R,8S)-7,8-diammoniononanoate + CO2 + ATP = (4R,5S)-dethiobiotin + ADP + phosphate + 3 H(+). It carries out the reaction (8S)-8-amino-7-oxononanoate + S-adenosyl-L-methionine = S-adenosyl-4-methylsulfanyl-2-oxobutanoate + (7R,8S)-7,8-diammoniononanoate. The protein operates within cofactor biosynthesis; biotin biosynthesis; biotin from 7,8-diaminononanoate: step 1/2. It participates in cofactor biosynthesis; biotin biosynthesis; 7,8-diaminononanoate from 8-amino-7-oxononanoate (SAM route): step 1/1. In terms of biological role, bifunctional enzyme; part of the cluster involved in the biosynthesis of biotin (also known as vitamin B8 or vitamin H), a water-soluble vitamin that functions as a prosthetic group of many carboxylases, such as acetyl-CoA carboxylase and pyruvate carboxylase. Catalyzes a mechanistically unusual reaction, the ATP-dependent insertion of CO2 between the N7 and N8 nitrogen atoms of 7,8-diaminopelargonic acid (DAPA) to form an ureido ring. Also catalyzes the transfer of the alpha-amino group from S-adenosyl-L-methionine (SAM) to 7-keto-8-aminopelargonic acid (KAPA) to form 7,8-diaminopelargonic acid (DAPA). It is the only animotransferase known to utilize SAM as an amino donor. The chain is Bifunctional dethiobiotin synthetase/adenosylmethionine-8-amino-7-oxononanoate aminotransferase from Emericella nidulans (strain FGSC A4 / ATCC 38163 / CBS 112.46 / NRRL 194 / M139) (Aspergillus nidulans).